We begin with the raw amino-acid sequence, 320 residues long: Cyclin-H (320 aa).

S5 is subject to Phosphoserine; by CDK8. S132 is modified (phosphoserine). Phosphoserine; by CDK8 is present on S304.

Belongs to the cyclin family. Cyclin C subfamily. As to quaternary structure, associates primarily with CDK7 and MAT1 to form the CAK complex. CAK can further associate with the core-TFIIH to form the TFIIH basal transcription factor.

The protein resides in the nucleus. Regulates CDK7, the catalytic subunit of the CDK-activating kinase (CAK) enzymatic complex. CAK activates the cyclin-associated kinases CDK1, CDK2, CDK4 and CDK6 by threonine phosphorylation. CAK complexed to the core-TFIIH basal transcription factor activates RNA polymerase II by serine phosphorylation of the repetitive C-terminal domain (CTD) of its large subunit (POLR2A), allowing its escape from the promoter and elongation of the transcripts. Involved in cell cycle control and in RNA transcription by RNA polymerase II. Its expression and activity are constant throughout the cell cycle. This chain is Cyclin-H (CCNH), found in Bos taurus (Bovine).